We begin with the raw amino-acid sequence, 82 residues long: Myrmicitoxin(1)-Pm3a (82 aa).

The N-terminal stretch at 1–23 (MEIPKLLYIAVIAIGLSGSLTCA) is a signal peptide. Positions 24 to 59 (TPLANPLADPEAEAEAKATAEATAEAIAEALAEPEP) are excised as a propeptide. Position 81 is a leucine amide (Leu-81).

It belongs to the formicidae venom clade 1 family. As to expression, expressed by the venom gland.

It is found in the secreted. Its function is as follows. Toxin that causes a slowly developing temporary paralysis when intrathoracically injected into insects (blowflies). Does not cause spontaneous nocifensive behaviors by intraplantar injection in mice. The sequence is that of Myrmicitoxin(1)-Pm3a from Pogonomyrmex maricopa (Maricopa harvester ant).